Consider the following 243-residue polypeptide: MPCTRSRPSLYSLSYIKRGKTRNCLYPFWSPYAYYLYCYKYRITLREKMLPCCYRSITYKEQEDLTLRPHCCLPCSCLPYSCLPCSESLEGLQVGRSTAQEKDHSQLKELYSAGNLTVLSADPLLHQDPVQLDFHFRLTPHSSAHWHGLLCDHQLFLDIPFQALEQGNRESLTATLEYVEEKTNVDSVFVNFQSNHKDRGALLRAFSYMGFEVVRPDHPALPPWDNVIFMVYPLERDLGQPGQ.

Residues Ser-6, Ser-9, and Ser-12 each carry the phosphoserine modification.

The protein belongs to the ODC antizyme family. In terms of assembly, interacts with ODC1 and thereby sterically blocks ODC homodimerization. Interacts with AZIN2; this interaction disrupts the interaction between the antizyme and ODC1. Interacts with GGN. Isoform 2 interacts with PPP1R16A; Modulates PPP1CB activity. As to expression, testis-specific. Isoform 2 is expressed in outer dense fibers, fibrous sheath and the connecting piece of sperm.

The protein localises to the nucleus. It is found in the cytoplasm. The protein resides in the cell projection. It localises to the cilium. Its subcellular location is the flagellum. In terms of biological role, ornithine decarboxylase (ODC) antizyme protein that negatively regulates ODC activity and intracellular polyamine biosynthesis and uptake in response to increased intracellular polyamine levels. Binds to ODC monomers, inhibiting the assembly of the functional ODC homodimers. Does not target the ODC monomers for degradation, which allows a protein synthesis-independent restoration of ODC activity. Stabilizes AZIN2 by interfering with its ubiquitination. Involved in the translocation of AZNI2 from ER-Golgi intermediate compartment (ERGIC) to the cytosol. Probably plays a key role in spermatogenesis by regulating the intracellular concentration of polyamines in haploid germ cells. Functionally, does not possess antizyme activity. Modulates PPP1CB activity through its interaction with PPP1R16A. This chain is Ornithine decarboxylase antizyme 3, found in Rattus norvegicus (Rat).